The primary structure comprises 308 residues: General transcription factor IIH subunit 3 (308 aa).

A C4-type zinc finger spans residues 268 to 285 (CSVCLSIFCNFSPICTTC).

The protein belongs to the TFB4 family. As to quaternary structure, part of a TFIID-containing RNA polymerase II pre-initiation complex that is composed of TBP and at least GTF2A1, GTF2A2, GTF2E1, GTF2E2, GTF2F1, GTF2H2, GTF2H3, GTF2H4, GTF2H5, GTF2B, TCEA1, ERCC2, ERCC3, TAF1, TAF2, TAF3, TAF4, TAF5, TAF6, TAF7, TAF8, TAF9, TAF10, TAF11, TAF12 and TAF13. Component of the 7-subunit TFIIH core complex composed of XPB/ERCC3, XPD/ERCC2, GTF2H1, GTF2H2, GTF2H3, GTF2H4 and GTF2H5, which is active in NER. The core complex associates with the 3-subunit CDK-activating kinase (CAK) module composed of CCNH/cyclin H, CDK7 and MNAT1 to form the 10-subunit holoenzyme (holo-TFIIH) active in transcription. Interacts with RARA; the interaction requires prior phosphorylation of RARA on 'Ser-369' which then enhances interaction of RARA with CDK7.

The protein localises to the nucleus. In terms of biological role, component of the general transcription and DNA repair factor IIH (TFIIH) core complex, which is involved in general and transcription-coupled nucleotide excision repair (NER) of damaged DNA and, when complexed to CAK, in RNA transcription by RNA polymerase II. In NER, TFIIH acts by opening DNA around the lesion to allow the excision of the damaged oligonucleotide and its replacement by a new DNA fragment. In transcription, TFIIH has an essential role in transcription initiation. When the pre-initiation complex (PIC) has been established, TFIIH is required for promoter opening and promoter escape. Phosphorylation of the C-terminal tail (CTD) of the largest subunit of RNA polymerase II by the kinase module CAK controls the initiation of transcription. The polypeptide is General transcription factor IIH subunit 3 (GTF2H3) (Homo sapiens (Human)).